Here is a 267-residue protein sequence, read N- to C-terminus: V-type proton ATPase subunit D (267 aa).

This sequence belongs to the V-ATPase D subunit family. In terms of assembly, V-ATPase is a heteromultimeric enzyme composed of a peripheral catalytic V1 complex (components A to H) attached to an integral membrane V0 proton pore complex (components: a, c, c', c'', d, e, f and VOA1).

The protein localises to the vacuole membrane. In terms of biological role, subunit of the V1 complex of vacuolar(H+)-ATPase (V-ATPase), a multisubunit enzyme composed of a peripheral complex (V1) that hydrolyzes ATP and a membrane integral complex (V0) that translocates protons. V-ATPase is responsible for acidifying and maintaining the pH of intracellular compartments. The chain is V-type proton ATPase subunit D (VMA8) from Candida albicans (strain SC5314 / ATCC MYA-2876) (Yeast).